The sequence spans 765 residues: uncharacterized protein (765 aa).

This is an uncharacterized protein from Methanocaldococcus jannaschii (strain ATCC 43067 / DSM 2661 / JAL-1 / JCM 10045 / NBRC 100440) (Methanococcus jannaschii).